A 201-amino-acid polypeptide reads, in one-letter code: Protein GrpE (201 aa).

The segment at 1 to 32 (MTDRDRQPEDTTAPTGEPVVSKPYIMPDDPEP) is disordered.

It belongs to the GrpE family. Homodimer.

The protein resides in the cytoplasm. Its function is as follows. Participates actively in the response to hyperosmotic and heat shock by preventing the aggregation of stress-denatured proteins, in association with DnaK and GrpE. It is the nucleotide exchange factor for DnaK and may function as a thermosensor. Unfolded proteins bind initially to DnaJ; upon interaction with the DnaJ-bound protein, DnaK hydrolyzes its bound ATP, resulting in the formation of a stable complex. GrpE releases ADP from DnaK; ATP binding to DnaK triggers the release of the substrate protein, thus completing the reaction cycle. Several rounds of ATP-dependent interactions between DnaJ, DnaK and GrpE are required for fully efficient folding. This is Protein GrpE from Bradyrhizobium diazoefficiens (strain JCM 10833 / BCRC 13528 / IAM 13628 / NBRC 14792 / USDA 110).